A 214-amino-acid chain; its full sequence is Probable transaldolase (214 aa).

The Schiff-base intermediate with substrate role is filled by Lys83.

The protein belongs to the transaldolase family. Type 3B subfamily.

It localises to the cytoplasm. The enzyme catalyses D-sedoheptulose 7-phosphate + D-glyceraldehyde 3-phosphate = D-erythrose 4-phosphate + beta-D-fructose 6-phosphate. It participates in carbohydrate degradation; pentose phosphate pathway; D-glyceraldehyde 3-phosphate and beta-D-fructose 6-phosphate from D-ribose 5-phosphate and D-xylulose 5-phosphate (non-oxidative stage): step 2/3. Functionally, transaldolase is important for the balance of metabolites in the pentose-phosphate pathway. The protein is Probable transaldolase of Geobacter sulfurreducens (strain ATCC 51573 / DSM 12127 / PCA).